A 747-amino-acid chain; its full sequence is MVPGSEGPARAGSVVADVVFVIEGTANLGPYFEGLRKHYLLPAIEYFNGGPPAETDFGGDYGGTQYSLVVFNTVDCAPESYVQCHAPTSSAYEFVTWLDGIKFMGGGGESCSLIAEGLSTALQLFDDFKKMREQIGQTHRVCLLICNSPPYLLPAVESTTYSGCTTENLVQQIGERGIHFSIVSPRKLPALRLLFEKAAPPALLEPLQPPTDVSQDPRHMVLVRGLVLPVGGGSAPGPLQSKQPVPLPPAAPSGATLSAAPQQPLPPVPPQYQVPGNLSAAQVAAQNAVEAAKNQKAGLGPRFSPITPLQQAAPGVGPPFSQAPAPQLPPGPPGAPKPPPASQPSLVSTVAPGSGLAPTAQPGAPSMAGTVAPGGVSGPSPAQLGAPALGGQQSVSNKLLAWSGVLEWQEKPKPASVDANTKLTRSLPCQVYVNHGENLKTEQWPQKLIMQLIPQQLLTTLGPLFRNSRMVQFHFTNKDLESLKGLYRIMGNGFAGCVHFPHTAPCEVRVLMLLYSSKKKIFMGLIPYDQSGFVNGIRQVITNHKQVQQQKLEQQQRGMGGQQAPPGLGPILEDQARPSQNLLQLRPPQPQPQGTVGASGATGQPQPQGTAQPPPGAPQGPPGAASGPPPPGPILRPQNPGANPQLRSLLLNPPPPQTGVPPPQASLHHLQPPGAPALLPPPHQGLGQPQLGPPLLHPPPAQSWPAQLPPRAPLPGQMLLSGGPRGPVPQPGLQPSVMEDDILMDLI.

The interaction with the Mediator complex stretch occupies residues 1–226; that stretch reads MVPGSEGPAR…PRHMVLVRGL (226 aa). Disordered stretches follow at residues 233 to 274 and 299 to 390; these read GSAP…QYQV and LGPR…PALG. Composition is skewed to pro residues over residues 263–272 and 326–342; these read QPLPPVPPQY and PQLP…PPAS. The tract at residues 389–543 is interaction with VP16; sequence LGGQQSVSNK…VNGIRQVITN (155 aa). The interaction with CREBBP stretch occupies residues 395 to 545; that stretch reads VSNKLLAWSG…GIRQVITNHK (151 aa). The segment at 548 to 747 is disordered; it reads QQQKLEQQQR…MEDDILMDLI (200 aa). 2 interaction with RARA regions span residues 564–653 and 640–707; these read APPG…LLNP and PGAN…WPAQ. A compositionally biased stretch (low complexity) spans 598–611; that stretch reads ASGATGQPQPQGTA. Residues 612-634 are compositionally biased toward pro residues; sequence QPPPGAPQGPPGAASGPPPPGPI. The LXXLL motif motif lies at 646 to 650; it reads LRSLL. Pro residues-rich tracts occupy residues 652–664, 673–683, and 691–713; these read NPPP…PPPQ, PGAPALLPPPH, and LGPP…PRAP. Arginine 725 bears the Asymmetric dimethylarginine mark. Positions 738 to 747 are enriched in acidic residues; it reads MEDDILMDLI.

It belongs to the Mediator complex subunit 25 family. In terms of assembly, component of the Mediator complex, which is composed of MED1, MED4, MED6, MED7, MED8, MED9, MED10, MED11, MED12, MED13, MED13L, MED14, MED15, MED16, MED17, MED18, MED19, MED20, MED21, MED22, MED23, MED24, MED25, MED26, MED27, MED29, MED30, MED31, CCNC, CDK8 and CDC2L6/CDK11. The MED12, MED13, CCNC and CDK8 subunits form a distinct module termed the CDK8 module. Mediator containing the CDK8 module is less active than Mediator lacking this module in supporting transcriptional activation. Individual preparations of the Mediator complex lacking one or more distinct subunits have been variously termed ARC, CRSP, DRIP, PC2, SMCC and TRAP. Interacts with CREBBP. Interacts with ESR1, GR, RARA, RXRA and THRB in a ligand-dependent fashion. Binds the Herpes simplex virus activator VP16. Ubiquitously expressed. Highest levels in brain, heart, kidney, peripheral leukocytes, placenta, skeletal muscle and spleen.

The protein resides in the nucleus. Its function is as follows. Component of the Mediator complex, a coactivator involved in the regulated transcription of nearly all RNA polymerase II-dependent genes. Mediator functions as a bridge to convey information from gene-specific regulatory proteins to the basal RNA polymerase II transcription machinery. Mediator is recruited to promoters by direct interactions with regulatory proteins and serves as a scaffold for the assembly of a functional preinitiation complex with RNA polymerase II and the general transcription factors. Required for RARA/RXRA-mediated transcription. This chain is Mediator of RNA polymerase II transcription subunit 25 (MED25), found in Homo sapiens (Human).